A 387-amino-acid polypeptide reads, in one-letter code: EARP and GARP complex-interacting protein 1 (387 aa).

An N-acetylmethionine modification is found at Met-1. 4 WD repeats span residues 132 to 172, 180 to 222, 226 to 266, and 270 to 310; these read TAHS…SQAV, GGKG…QIYC, AHGQ…EPVK, and EHSH…SEPF. The disordered stretch occupies residues 310-334; that stretch reads FGHLVDDDDISDQEDHRSEEKSKEP. Ser-320 carries the post-translational modification Phosphoserine. A compositionally biased stretch (basic and acidic residues) spans 322–334; it reads QEDHRSEEKSKEP. One copy of the WD 5 repeat lies at 345 to 385; the sequence is EHEDSVYAVDWSSADPWLFASLSYDGRLVINRVPRALKYHI.

This sequence belongs to the WD repeat EIPR1 family. In terms of assembly, interacts with two multisubunit tethering complexes: EARP composed of VPS50, VPS51, VPS52 and VPS53 subunits and GARP complex composed of VPS51, VPS52, VPS53 and VPS54 subunits. Interacts with SNAP29.

The protein localises to the golgi apparatus. It is found in the trans-Golgi network. Functionally, acts as a component of endosomal retrieval machinery that is involved in protein transport from early endosomes to either recycling endosomes or the trans-Golgi network. Mediates the recruitment of Golgi-associated retrograde protein (GARP) complex to the trans-Golgi network and controls early endosome-to-Golgi transport of internalized protein. Promotes the recycling of internalized transferrin receptor (TFRC) to the plasma membrane through interaction with endosome-associated recycling protein (EARP) complex. Controls proper insulin distribution and secretion, and retention of cargo in mature dense core vesicles. Required for the stability of the endosome-associated retrograde protein (EARP) complex subunits and for proper localization and association of EARP with membranes. This Macaca fascicularis (Crab-eating macaque) protein is EARP and GARP complex-interacting protein 1.